The primary structure comprises 123 residues: uncharacterized protein (123 aa).

Residues 5–25 traverse the membrane as a helical segment; that stretch reads GTLVIIFAIVLILCIMLLFFY. The segment at 32-53 is disordered; that stretch reads KPSVLPPPIPPPTPPPSKKKYD. Pro residues predominate over residues 35 to 47; sequence VLPPPIPPPTPPP.

The protein belongs to the asfivirus CP123L family.

The protein resides in the host membrane. Its subcellular location is the virion. This is an uncharacterized protein from Ornithodoros (relapsing fever ticks).